We begin with the raw amino-acid sequence, 840 residues long: Protein translocase subunit SecA (840 aa).

ATP is bound by residues Q85, 103–107, and D492; that span reads GEGKT. The disordered stretch occupies residues 787–822; the sequence is QRERVAKETGASHGGDSQEVKKKPVKKEPKVGRNDL. The segment covering 802–819 has biased composition (basic and acidic residues); it reads DSQEVKKKPVKKEPKVGR. Zn(2+) contacts are provided by C823, C825, C834, and C835.

This sequence belongs to the SecA family. As to quaternary structure, monomer and homodimer. Part of the essential Sec protein translocation apparatus which comprises SecA, SecYEG and auxiliary proteins SecDF. Other proteins may also be involved. Requires Zn(2+) as cofactor.

The protein localises to the cell membrane. The protein resides in the cytoplasm. It catalyses the reaction ATP + H2O + cellular proteinSide 1 = ADP + phosphate + cellular proteinSide 2.. In terms of biological role, part of the Sec protein translocase complex. Interacts with the SecYEG preprotein conducting channel. Has a central role in coupling the hydrolysis of ATP to the transfer of proteins into and across the cell membrane, serving as an ATP-driven molecular motor driving the stepwise translocation of polypeptide chains across the membrane. This chain is Protein translocase subunit SecA, found in Clostridium perfringens (strain ATCC 13124 / DSM 756 / JCM 1290 / NCIMB 6125 / NCTC 8237 / Type A).